The following is a 269-amino-acid chain: Expansin-B9 (269 aa).

Positions methionine 1–cysteine 24 are cleaved as a signal peptide. N-linked (GlcNAc...) asparagine glycosylation occurs at asparagine 34. Residues glycine 63 to glycine 169 enclose the Expansin-like EG45 domain. 3 disulfide bridges follow: cysteine 66–cysteine 94, cysteine 97–cysteine 164, and cysteine 102–cysteine 108. In terms of domain architecture, Expansin-like CBD spans asparagine 183–serine 264.

This sequence belongs to the expansin family. Expansin B subfamily.

The protein localises to the secreted. Its subcellular location is the cell wall. The protein resides in the membrane. Functionally, may cause loosening and extension of plant cell walls by disrupting non-covalent bonding between cellulose microfibrils and matrix glucans. No enzymatic activity has been found. May be required for rapid internodal elongation in deepwater rice during submergence. The sequence is that of Expansin-B9 (EXPB9) from Oryza sativa subsp. japonica (Rice).